A 199-amino-acid chain; its full sequence is N-(5'-phosphoribosyl)anthranilate isomerase (199 aa).

The protein belongs to the TrpF family.

It carries out the reaction N-(5-phospho-beta-D-ribosyl)anthranilate = 1-(2-carboxyphenylamino)-1-deoxy-D-ribulose 5-phosphate. Its pathway is amino-acid biosynthesis; L-tryptophan biosynthesis; L-tryptophan from chorismate: step 3/5. In Lacticaseibacillus casei (strain BL23) (Lactobacillus casei), this protein is N-(5'-phosphoribosyl)anthranilate isomerase.